The primary structure comprises 75 residues: UPF0270 protein Avin_35000 (75 aa).

The protein belongs to the UPF0270 family.

This chain is UPF0270 protein Avin_35000, found in Azotobacter vinelandii (strain DJ / ATCC BAA-1303).